A 98-amino-acid polypeptide reads, in one-letter code: Large ribosomal subunit protein uL23 (98 aa).

The protein belongs to the universal ribosomal protein uL23 family. As to quaternary structure, part of the 50S ribosomal subunit. Contacts protein L29, and trigger factor when it is bound to the ribosome.

One of the early assembly proteins it binds 23S rRNA. One of the proteins that surrounds the polypeptide exit tunnel on the outside of the ribosome. Forms the main docking site for trigger factor binding to the ribosome. The chain is Large ribosomal subunit protein uL23 from Caulobacter sp. (strain K31).